Here is a 349-residue protein sequence, read N- to C-terminus: E3 ubiquitin-protein ligase rnf146 (349 aa).

Residues 1–21 form a disordered region; sequence MASCGEVDHSVSSLPSSKKGS. The span at 10–21 shows a compositional bias: low complexity; that stretch reads SVSSLPSSKKGS. An RING-type zinc finger spans residues 41–79; sequence CAICLQSCVHPVQLPCRHVFCFLCVKGASWQSKRCALCR. A WWE domain is found at 97 to 173; it reads ELKTGGRGAT…EHGRRRKIKR (77 aa). Residues Y113, R116, W120, Y150, Q159, R169, and K181 each contribute to the a glycoprotein site. Disordered regions lie at residues 226-251 and 264-349; these read TTVL…SPSL and DAPE…CTEV. Positions 283 to 292 are enriched in polar residues; the sequence is SMSSSPNTYA. The segment covering 298–307 has biased composition (acidic residues); that stretch reads WSDDEGDGEA. A compositionally biased stretch (basic and acidic residues) spans 308-317; that stretch reads VEPREQRLRL.

It localises to the cytoplasm. The protein localises to the cytosol. It is found in the nucleus. It carries out the reaction S-ubiquitinyl-[E2 ubiquitin-conjugating enzyme]-L-cysteine + [acceptor protein]-L-lysine = [E2 ubiquitin-conjugating enzyme]-L-cysteine + N(6)-ubiquitinyl-[acceptor protein]-L-lysine.. The protein operates within protein modification; protein ubiquitination. Functionally, E3 ubiquitin-protein ligase that specifically binds poly-ADP-ribosylated proteins and mediates their ubiquitination and subsequent degradation. May regulate many important biological processes, such as cell survival and DNA damage response. Acts as an activator of the Wnt signaling pathway by mediating the ubiquitination of poly-ADP-ribosylated proteins. Neuroprotective protein. Protects against cell death induced by DNA damaging agents and rescues cells from G1 arrest. Promotes cell survival after gamma-irradiation. Facilitates DNA repair. This is E3 ubiquitin-protein ligase rnf146 (rnf146) from Salmo salar (Atlantic salmon).